The sequence spans 460 residues: Putative type II methyltransferase M.OihORF3336P (460 aa).

An SAM-dependent MTase C5-type domain is found at 15–458; sequence PEVVDLFSGC…EAMKKNIQGG (444 aa). C97 is an active-site residue.

Belongs to the class I-like SAM-binding methyltransferase superfamily. C5-methyltransferase family.

It catalyses the reaction a 2'-deoxycytidine in DNA + S-adenosyl-L-methionine = a 5-methyl-2'-deoxycytidine in DNA + S-adenosyl-L-homocysteine + H(+). Its function is as follows. A methylase, recognizes the double-stranded sequence 5'-ACCGGT-3', methylates C-? on both strands. No endonuclease has been identified for this methylase. This is Putative type II methyltransferase M.OihORF3336P from Oceanobacillus iheyensis (strain DSM 14371 / CIP 107618 / JCM 11309 / KCTC 3954 / HTE831).